A 92-amino-acid chain; its full sequence is MSKVCIIAWVYGRVQGVGFRYTTQYEAKRLGLTGYAKNLDDGSVEVVACGEEGQVEKLMQWLKSGGPRSARVERVLSEPHHPSGELTDFRIR.

Cysteines 5 and 49 form a disulfide. Residues 5-92 form the Acylphosphatase-like domain; sequence CIIAWVYGRV…SGELTDFRIR (88 aa). Catalysis depends on residues arginine 20 and asparagine 38.

The protein belongs to the acylphosphatase family.

The enzyme catalyses an acyl phosphate + H2O = a carboxylate + phosphate + H(+). The sequence is that of Acylphosphatase from Escherichia coli O157:H7.